A 215-amino-acid chain; its full sequence is Ras-related protein Rab-5A (215 aa).

GTP is bound by residues Ser-29, Ala-30, Gly-32, Lys-33, Ser-34, Ser-35, His-46, Glu-47, Thr-52, and Gly-78. Ser-34 contributes to the Mg(2+) binding site. Short sequence motifs (switch) lie at residues 44-56 (QFHE…IGAA) and 77-93 (AGQE…YRGA). Thr-52 provides a ligand contact to Mg(2+). Ser-84 bears the Phosphoserine mark. GTP-binding residues include Asn-133, Lys-134, Asp-136, Ala-164, and Lys-165. The segment at 181 to 215 (LPKNEPQNPGANSARGRGVDLTEPTQPTRSQCCSN) is disordered. The span at 203–215 (EPTQPTRSQCCSN) shows a compositional bias: polar residues. 2 S-geranylgeranyl cysteine lipidation sites follow: Cys-212 and Cys-213.

This sequence belongs to the small GTPase superfamily. Rab family. In terms of assembly, interacts with GDI1; this promotes dissociation from membranes; phosphorylation at Ser-84 disrupts this interaction. Interacts with GDI2; phosphorylation at Ser-84 disrupts the interaction. Binds EEA1. Interacts with ALS2CL, SUN2, ZFYVE20 and RUFY1. Interacts with RIN1 and GAPVD1, which regulate its pathway, probably by acting as a GEF. Interacts with SGSM1 and SGSM3. Interacts with PIK3CB. Interacts with RABEP1 and RINL. Interacts with OCRL and INPP5F. May be a component of a complex composed of RAB5A, DYN2 and PIK3C3. Does not interact with the BLOC-3 complex (heterodimer of HPS1 and HPS4). Interacts with CLN5. Interacts with APPL2. Interacts with F8A1/F8A2/F8A3. Found in a complex with F8A1/F8A2/F8A3, HTT and RAB5A; mediates the recruitment of HTT by RAB5A onto early endosomes. Interacts with ATP9A. Interacts with PPP1R21; mediates the recruitment of FERRY complex by RAB5A onto early endosomes. Mg(2+) serves as cofactor. In terms of processing, phosphorylation of Ser-84 in the switch II region by LRRK2 prevents the association of RAB regulatory proteins, including RAB GDP dissociation inhibitors GDI1 and GDI2.

It is found in the cell membrane. The protein localises to the early endosome membrane. Its subcellular location is the melanosome. It localises to the cytoplasmic vesicle. The protein resides in the cell projection. It is found in the ruffle. The protein localises to the cytoplasm. Its subcellular location is the cytosol. It localises to the membrane. The protein resides in the phagosome membrane. It is found in the endosome membrane. It catalyses the reaction GTP + H2O = GDP + phosphate + H(+). With respect to regulation, regulated by guanine nucleotide exchange factors (GEFs) including RINL, which promote the exchange of bound GDP for free GTP. Regulated by GTPase activating proteins (GAPs) which increase the GTP hydrolysis activity. Inhibited by GDP dissociation inhibitors (GDIs). Its function is as follows. The small GTPases Rab are key regulators of intracellular membrane trafficking, from the formation of transport vesicles to their fusion with membranes. Rabs cycle between an inactive GDP-bound form and an active GTP-bound form that is able to recruit to membranes different sets of downstream effectors directly responsible for vesicle formation, movement, tethering and fusion. RAB5A is required for the fusion of plasma membranes and early endosomes. Contributes to the regulation of filopodia extension. Required for the exosomal release of SDCBP, CD63, PDCD6IP and syndecan. Regulates maturation of apoptotic cell-containing phagosomes, probably downstream of DYN2 and PIK3C3. This chain is Ras-related protein Rab-5A (RAB5A), found in Canis lupus familiaris (Dog).